Consider the following 294-residue polypeptide: Casein kinase II subunit beta (294 aa).

2 disordered regions span residues Asp-66–Asn-90 and Lys-269–Glu-294. The segment covering Asp-70–Ser-87 has biased composition (low complexity). Acidic residues predominate over residues Glu-273–Asp-288.

The protein belongs to the casein kinase 2 subunit beta family. Tetramer composed of two alpha chains, one beta chain and one beta' chain. In terms of processing, phosphorylated by alpha subunit.

Its function is as follows. Regulatory subunit of casein kinase II/CK2. As part of the kinase complex regulates the basal catalytic activity of the alpha subunit a constitutively active serine/threonine-protein kinase that phosphorylates a large number of substrates containing acidic residues C-terminal to the phosphorylated serine or threonine. This chain is Casein kinase II subunit beta (CKB1), found in Candida albicans (Yeast).